The sequence spans 463 residues: DDB1- and CUL4-associated factor 12-like protein 1 (463 aa).

Residues 1 to 35 (MAQQQTGSRKRKAPAVEADAESSPSQGLAAADGEG) form a disordered region. 6 WD repeats span residues 87–137 (LTER…PLLR), 138–184 (DSEA…SLDP), 185–252 (LCLG…DVEA), 253–297 (IPRA…ALSR), 298–341 (LLSI…QQNI), and 342–376 (RPLC…LFYD).

It belongs to the WD repeat DCAF12 family.

This is DDB1- and CUL4-associated factor 12-like protein 1 (DCAF12L1) from Homo sapiens (Human).